The primary structure comprises 118 residues: Large ribosomal subunit protein uL24 (118 aa).

It belongs to the universal ribosomal protein uL24 family. As to quaternary structure, part of the 50S ribosomal subunit.

In terms of biological role, one of two assembly initiator proteins, it binds directly to the 5'-end of the 23S rRNA, where it nucleates assembly of the 50S subunit. Functionally, one of the proteins that surrounds the polypeptide exit tunnel on the outside of the subunit. This chain is Large ribosomal subunit protein uL24, found in Synechococcus sp. (strain CC9902).